A 698-amino-acid chain; its full sequence is Effector protein AvrPphDPgy (698 aa).

Over residues 1–15 (MNPLRSIQHNITTPP) the composition is skewed to polar residues. Disordered regions lie at residues 1-36 (MNPL…HPKR) and 171-200 (VDSS…DSDS). Over residues 172–181 (DSSSPLLSSP) the composition is skewed to low complexity.

It localises to the secreted. Its function is as follows. Effector protein involved in non-host recognition. The protein is Effector protein AvrPphDPgy (avrPphDPgy) of Pseudomonas savastanoi pv. glycinea (Pseudomonas syringae pv. glycinea).